The primary structure comprises 1166 residues: ATP-dependent helicase/deoxyribonuclease subunit B (1166 aa).

In terms of domain architecture, UvrD-like helicase ATP-binding spans 1-390 (MGVEFLVGRS…HPLIEFIRSS (390 aa)). Position 8 to 15 (8 to 15 (GRSGSGKT)) interacts with ATP. A UvrD-like helicase C-terminal domain is found at 281–586 (TKRHQHAPEL…HFSLIPPALD (306 aa)). Residues Cys-801, Cys-1121, Cys-1124, and Cys-1130 each coordinate [4Fe-4S] cluster.

This sequence belongs to the helicase family. AddB/RexB type 1 subfamily. Heterodimer of AddA and AddB. Mg(2+) is required as a cofactor. The cofactor is [4Fe-4S] cluster.

Functionally, the heterodimer acts as both an ATP-dependent DNA helicase and an ATP-dependent, dual-direction single-stranded exonuclease. Recognizes the chi site generating a DNA molecule suitable for the initiation of homologous recombination. The AddB subunit has 5' -&gt; 3' nuclease activity but not helicase activity. This chain is ATP-dependent helicase/deoxyribonuclease subunit B, found in Bacillus velezensis (strain DSM 23117 / BGSC 10A6 / LMG 26770 / FZB42) (Bacillus amyloliquefaciens subsp. plantarum).